The primary structure comprises 417 residues: D-galactonate dehydratase family member RspA (417 aa).

Substrate is bound by residues Q43 and H127. The active-site Proton donor/acceptor is the Y158. D223 is a Mg(2+) binding site. The active-site Proton donor/acceptor is the H225. Residues E249 and E275 each contribute to the Mg(2+) site. Substrate-binding residues include E275, R296, H325, D329, and E352.

The protein belongs to the mandelate racemase/muconate lactonizing enzyme family. GalD subfamily. Mg(2+) serves as cofactor.

It carries out the reaction D-gluconate = 2-dehydro-3-deoxy-D-gluconate + H2O. Has low D-gluconate dehydratase activity (in vitro), suggesting that it has no significant role in D-gluconate degradation in vivo. Has no detectable activity with a panel of 70 other acid sugars (in vitro). This is D-galactonate dehydratase family member RspA (rspA) from Pantoea ananatis (strain LMG 20103).